A 690-amino-acid polypeptide reads, in one-letter code: Polyphosphate kinase (690 aa).

An ATP-binding site is contributed by Asn45. Mg(2+) is bound by residues Arg375 and Arg405. His435 serves as the catalytic Phosphohistidine intermediate. Residues Tyr468, Arg564, and His592 each coordinate ATP.

This sequence belongs to the polyphosphate kinase 1 (PPK1) family. Mg(2+) serves as cofactor. An intermediate of this reaction is the autophosphorylated ppk in which a phosphate is covalently linked to a histidine residue through a N-P bond.

It carries out the reaction [phosphate](n) + ATP = [phosphate](n+1) + ADP. In terms of biological role, catalyzes the reversible transfer of the terminal phosphate of ATP to form a long-chain polyphosphate (polyP). This Pseudomonas aeruginosa (strain ATCC 15692 / DSM 22644 / CIP 104116 / JCM 14847 / LMG 12228 / 1C / PRS 101 / PAO1) protein is Polyphosphate kinase.